A 185-amino-acid chain; its full sequence is Signal peptidase complex subunit 3 (185 aa).

Residues 1-16 lie on the Cytoplasmic side of the membrane; it reads MHTSIQRIQQTFSQAS. Residues 17-37 form a helical; Signal-anchor for type II membrane protein membrane-spanning segment; sequence TVLSIIAAIVFVVSYIQLVVA. Residues 38-185 lie on the Lumenal side of the membrane; sequence NVWSLPEANF…KGSIKFPQLV (148 aa). The N-linked (GlcNAc...) asparagine glycan is linked to asparagine 151.

This sequence belongs to the SPCS3 family. Component of the signal peptidase complex (SPC) composed of a catalytic subunit SEC11 and three accessory subunits SPC1, SPC2 and SPC3. The complex induces a local thinning of the ER membrane which is used to measure the length of the signal peptide (SP) h-region of protein substrates. This ensures the selectivity of the complex towards h-regions shorter than 18-20 amino acids. SPC associates with the translocon complex.

It is found in the endoplasmic reticulum membrane. In terms of biological role, essential component of the signal peptidase complex (SPC) which catalyzes the cleavage of N-terminal signal sequences from nascent proteins as they are translocated into the lumen of the endoplasmic reticulum. Essential for the SPC catalytic activity, possibly by stabilizing and positioning the active center of the complex close to the lumenal surface. Essential for viability. This is Signal peptidase complex subunit 3 (SPC3) from Yarrowia lipolytica (strain CLIB 122 / E 150) (Yeast).